The chain runs to 270 residues: Interleukin-1 alpha (270 aa).

A propeptide spanning residues 1–114 (MAKVPDLFED…HDLEETIQPR (114 aa)) is cleaved from the precursor. An N-linked (GlcNAc...) asparagine glycan is attached at asparagine 46. At lysine 85 the chain carries N6-acetyllysine. Residues 85–89 (KKRRL) are nuclear localization signal (NLS). Serine 90 is modified (phosphoserine). Asparagine 139 carries an N-linked (GlcNAc...) asparagine glycan.

This sequence belongs to the IL-1 family. Monomer. Interacts with TMED10; the interaction mediates the translocation from the cytoplasm into the ERGIC (endoplasmic reticulum-Golgi intermediate compartment) and thereby secretion. Interacts with IL1R1. Interacts with S100A13; this interaction is the first step in the export of IL1A, followed by direct translocation of this complex across the plasma membrane. Post-translationally, acetylated within its nuclear localization sequence, which impacts subcellular localization. In terms of processing, proteolytic processed by CAPN1 in a calcium-dependent manner. Cleavage from 31 kDa precursor to 18 kDa biologically active molecules. Phosphorylated. Phosphorylation greatly enhances susceptibility to digestion and promotes the conversion of pre-IL1A alpha to the biologically active IL1A.

Its subcellular location is the nucleus. The protein resides in the cytoplasm. The protein localises to the secreted. In terms of biological role, cytokine constitutively present intracellularly in nearly all resting non-hematopoietic cells that plays an important role in inflammation and bridges the innate and adaptive immune systems. After binding to its receptor IL1R1 together with its accessory protein IL1RAP, forms the high affinity interleukin-1 receptor complex. Signaling involves the recruitment of adapter molecules such as MYD88, IRAK1 or IRAK4. In turn, mediates the activation of NF-kappa-B and the three MAPK pathways p38, p42/p44 and JNK pathways. Within the cell, acts as an alarmin and cell death results in its liberation in the extracellular space after disruption of the cell membrane to induce inflammation and alert the host to injury or damage. In addition to its role as a danger signal, which occurs when the cytokine is passively released by cell necrosis, directly senses DNA damage and acts as signal for genotoxic stress without loss of cell integrity. The protein is Interleukin-1 alpha of Rattus norvegicus (Rat).